A 188-amino-acid chain; its full sequence is Large ribosomal subunit protein eL18A (188 aa).

The disordered stretch occupies residues Gly-153 to Asn-188. Residues Arg-178 to Asn-188 are compositionally biased toward basic residues.

It belongs to the eukaryotic ribosomal protein eL18 family. As to quaternary structure, component of the large ribosomal subunit.

Its subcellular location is the cytoplasm. Its function is as follows. Component of the large ribosomal subunit. The ribosome is a large ribonucleoprotein complex responsible for the synthesis of proteins in the cell. The polypeptide is Large ribosomal subunit protein eL18A (rpl18-a) (Xenopus laevis (African clawed frog)).